The sequence spans 142 residues: Protein Turandot X (142 aa).

Positions 1–22 are cleaved as a signal peptide; sequence MGLSIGSLLICVFLGIVPFATA.

This sequence belongs to the Turandot family.

Its subcellular location is the secreted. Its function is as follows. A humoral factor that may play a role in stress tolerance. This chain is Protein Turandot X, found in Drosophila melanogaster (Fruit fly).